A 353-amino-acid polypeptide reads, in one-letter code: Holliday junction branch migration complex subunit RuvB (353 aa).

The large ATPase domain (RuvB-L) stretch occupies residues Thr4–Tyr190. Residues Leu29, Arg30, Gly71, Lys74, Thr75, Thr76, Glu137–Phe139, Arg180, Tyr190, and Arg227 each bind ATP. Thr75 is a binding site for Mg(2+). Positions Thr191–Asp261 are small ATPAse domain (RuvB-S). The segment at His264 to Pro353 is head domain (RuvB-H). 2 residues coordinate DNA: Arg319 and Arg324.

It belongs to the RuvB family. In terms of assembly, homohexamer. Forms an RuvA(8)-RuvB(12)-Holliday junction (HJ) complex. HJ DNA is sandwiched between 2 RuvA tetramers; dsDNA enters through RuvA and exits via RuvB. An RuvB hexamer assembles on each DNA strand where it exits the tetramer. Each RuvB hexamer is contacted by two RuvA subunits (via domain III) on 2 adjacent RuvB subunits; this complex drives branch migration. In the full resolvosome a probable DNA-RuvA(4)-RuvB(12)-RuvC(2) complex forms which resolves the HJ.

The protein localises to the cytoplasm. The catalysed reaction is ATP + H2O = ADP + phosphate + H(+). In terms of biological role, the RuvA-RuvB-RuvC complex processes Holliday junction (HJ) DNA during genetic recombination and DNA repair, while the RuvA-RuvB complex plays an important role in the rescue of blocked DNA replication forks via replication fork reversal (RFR). RuvA specifically binds to HJ cruciform DNA, conferring on it an open structure. The RuvB hexamer acts as an ATP-dependent pump, pulling dsDNA into and through the RuvAB complex. RuvB forms 2 homohexamers on either side of HJ DNA bound by 1 or 2 RuvA tetramers; 4 subunits per hexamer contact DNA at a time. Coordinated motions by a converter formed by DNA-disengaged RuvB subunits stimulates ATP hydrolysis and nucleotide exchange. Immobilization of the converter enables RuvB to convert the ATP-contained energy into a lever motion, pulling 2 nucleotides of DNA out of the RuvA tetramer per ATP hydrolyzed, thus driving DNA branch migration. The RuvB motors rotate together with the DNA substrate, which together with the progressing nucleotide cycle form the mechanistic basis for DNA recombination by continuous HJ branch migration. Branch migration allows RuvC to scan DNA until it finds its consensus sequence, where it cleaves and resolves cruciform DNA. The polypeptide is Holliday junction branch migration complex subunit RuvB (Aromatoleum aromaticum (strain DSM 19018 / LMG 30748 / EbN1) (Azoarcus sp. (strain EbN1))).